Consider the following 201-residue polypeptide: dITP/XTP pyrophosphatase (201 aa).

Residue 8 to 13 coordinates substrate; it reads TTNENK. Catalysis depends on aspartate 68, which acts as the Proton acceptor. Aspartate 68 contacts Mg(2+). Residues serine 69, 155–158, lysine 177, and 182–183 each bind substrate; these read FGYD and HR.

The protein belongs to the HAM1 NTPase family. Homodimer. Mg(2+) is required as a cofactor.

The enzyme catalyses XTP + H2O = XMP + diphosphate + H(+). The catalysed reaction is dITP + H2O = dIMP + diphosphate + H(+). It catalyses the reaction ITP + H2O = IMP + diphosphate + H(+). Pyrophosphatase that catalyzes the hydrolysis of nucleoside triphosphates to their monophosphate derivatives, with a high preference for the non-canonical purine nucleotides XTP (xanthosine triphosphate), dITP (deoxyinosine triphosphate) and ITP. Seems to function as a house-cleaning enzyme that removes non-canonical purine nucleotides from the nucleotide pool, thus preventing their incorporation into DNA/RNA and avoiding chromosomal lesions. In Borrelia garinii subsp. bavariensis (strain ATCC BAA-2496 / DSM 23469 / PBi) (Borreliella bavariensis), this protein is dITP/XTP pyrophosphatase.